The sequence spans 159 residues: Transcription elongation factor GreA (159 aa).

Residues 46-73 (AEYHAAKEEQSFVEGRIKEIELKLSRMQ) adopt a coiled-coil conformation.

It belongs to the GreA/GreB family.

Functionally, necessary for efficient RNA polymerase transcription elongation past template-encoded arresting sites. The arresting sites in DNA have the property of trapping a certain fraction of elongating RNA polymerases that pass through, resulting in locked ternary complexes. Cleavage of the nascent transcript by cleavage factors such as GreA or GreB allows the resumption of elongation from the new 3'terminus. GreA releases sequences of 2 to 3 nucleotides. The protein is Transcription elongation factor GreA of Vesicomyosocius okutanii subsp. Calyptogena okutanii (strain HA).